A 283-amino-acid polypeptide reads, in one-letter code: Daunorubicin resistance ABC transporter permease protein DrrB1 (283 aa).

The region spanning 53-280 is the ABC transmembrane type-2 domain; the sequence is VQLIDIVLMP…PLTMRLYRNK (228 aa). The next 6 helical transmembrane spans lie at 58 to 78, 85 to 105, 150 to 170, 171 to 191, 198 to 218, and 252 to 272; these read IVLM…GAFA, LQFY…VYTG, VFLG…VVGA, MLVL…LGVV, VSGT…IFVM, and FWDV…FAPL.

Belongs to the ABC-2 integral membrane protein family. The complex is probably composed of two ATP-binding proteins (DrrA1) and two transmembrane proteins (DrrB1).

Its subcellular location is the cell membrane. Part of the ABC transporter complex DrrA1B1 involved in daunorubicin efflux. Responsible for the translocation of the substrate across the membrane. Confers self-resistance to daunorubicin, an antibiotic produced by S.coeruleorubidus. This chain is Daunorubicin resistance ABC transporter permease protein DrrB1, found in Streptomyces coeruleorubidus.